The sequence spans 182 residues: ATP synthase subunit delta (182 aa).

It belongs to the ATPase delta chain family. In terms of assembly, F-type ATPases have 2 components, F(1) - the catalytic core - and F(0) - the membrane proton channel. F(1) has five subunits: alpha(3), beta(3), gamma(1), delta(1), epsilon(1). CF(0) has four main subunits: a(1), b(1), b'(1) and c(10-14). The alpha and beta chains form an alternating ring which encloses part of the gamma chain. F(1) is attached to F(0) by a central stalk formed by the gamma and epsilon chains, while a peripheral stalk is formed by the delta, b and b' chains.

The protein localises to the cellular thylakoid membrane. In terms of biological role, f(1)F(0) ATP synthase produces ATP from ADP in the presence of a proton or sodium gradient. F-type ATPases consist of two structural domains, F(1) containing the extramembraneous catalytic core and F(0) containing the membrane proton channel, linked together by a central stalk and a peripheral stalk. During catalysis, ATP synthesis in the catalytic domain of F(1) is coupled via a rotary mechanism of the central stalk subunits to proton translocation. This protein is part of the stalk that links CF(0) to CF(1). It either transmits conformational changes from CF(0) to CF(1) or is implicated in proton conduction. This Microcystis aeruginosa (strain NIES-843 / IAM M-2473) protein is ATP synthase subunit delta.